The following is a 633-amino-acid chain: Chaperone protein DnaK (633 aa).

Residue threonine 196 is modified to Phosphothreonine; by autocatalysis. Residues 594-633 (NLYGQPGAEPQPETNGHAGGSKGGDGAVNAEYEVIDGDDK) form a disordered region. Gly residues predominate over residues 610–619 (HAGGSKGGDG).

It belongs to the heat shock protein 70 family.

Its function is as follows. Acts as a chaperone. In Chlorobaculum tepidum (strain ATCC 49652 / DSM 12025 / NBRC 103806 / TLS) (Chlorobium tepidum), this protein is Chaperone protein DnaK.